The sequence spans 320 residues: Methenyltetrahydromethanopterin cyclohydrolase (320 aa).

The protein belongs to the MCH family.

The protein resides in the cytoplasm. It carries out the reaction 5,10-methenyl-5,6,7,8-tetrahydromethanopterin + H2O = N(5)-formyl-5,6,7,8-tetrahydromethanopterin + H(+). Its pathway is one-carbon metabolism; methanogenesis from CO(2); 5,10-methenyl-5,6,7,8-tetrahydromethanopterin from CO(2): step 3/3. Its function is as follows. Catalyzes the reversible interconversion of 5-formyl-H(4)MPT to methenyl-H(4)MPT(+). This is Methenyltetrahydromethanopterin cyclohydrolase (mch) from Methanothermobacter thermautotrophicus (strain ATCC 29096 / DSM 1053 / JCM 10044 / NBRC 100330 / Delta H) (Methanobacterium thermoautotrophicum).